A 195-amino-acid chain; its full sequence is Peptidyl-tRNA hydrolase (195 aa).

Tyr17 is a tRNA binding site. Residue His22 is the Proton acceptor of the active site. TRNA contacts are provided by Phe68, Asn70, and Asn116.

Belongs to the PTH family. In terms of assembly, monomer.

The protein resides in the cytoplasm. The catalysed reaction is an N-acyl-L-alpha-aminoacyl-tRNA + H2O = an N-acyl-L-amino acid + a tRNA + H(+). Hydrolyzes ribosome-free peptidyl-tRNAs (with 1 or more amino acids incorporated), which drop off the ribosome during protein synthesis, or as a result of ribosome stalling. Functionally, catalyzes the release of premature peptidyl moieties from peptidyl-tRNA molecules trapped in stalled 50S ribosomal subunits, and thus maintains levels of free tRNAs and 50S ribosomes. In Shewanella amazonensis (strain ATCC BAA-1098 / SB2B), this protein is Peptidyl-tRNA hydrolase.